The primary structure comprises 589 residues: Aspartate--tRNA(Asp/Asn) ligase (589 aa).

Residue E175 coordinates L-aspartate. Residues 199–202 (QQLK) form an aspartate region. L-aspartate is bound at residue R221. ATP is bound by residues 221–223 (RDE) and Q230. H451 is an L-aspartate binding site. An ATP-binding site is contributed by E485. R492 contributes to the L-aspartate binding site. An ATP-binding site is contributed by 537–540 (GIDR).

The protein belongs to the class-II aminoacyl-tRNA synthetase family. Type 1 subfamily. In terms of assembly, homodimer.

The protein resides in the cytoplasm. The catalysed reaction is tRNA(Asx) + L-aspartate + ATP = L-aspartyl-tRNA(Asx) + AMP + diphosphate. Aspartyl-tRNA synthetase with relaxed tRNA specificity since it is able to aspartylate not only its cognate tRNA(Asp) but also tRNA(Asn). Reaction proceeds in two steps: L-aspartate is first activated by ATP to form Asp-AMP and then transferred to the acceptor end of tRNA(Asp/Asn). The sequence is that of Aspartate--tRNA(Asp/Asn) ligase from Roseiflexus sp. (strain RS-1).